Reading from the N-terminus, the 342-residue chain is N-acetyl-gamma-glutamyl-phosphate reductase (342 aa).

Cysteine 156 is a catalytic residue.

It belongs to the NAGSA dehydrogenase family. Type 1 subfamily.

It is found in the cytoplasm. It carries out the reaction N-acetyl-L-glutamate 5-semialdehyde + phosphate + NADP(+) = N-acetyl-L-glutamyl 5-phosphate + NADPH + H(+). It participates in amino-acid biosynthesis; L-arginine biosynthesis; N(2)-acetyl-L-ornithine from L-glutamate: step 3/4. In terms of biological role, catalyzes the NADPH-dependent reduction of N-acetyl-5-glutamyl phosphate to yield N-acetyl-L-glutamate 5-semialdehyde. The polypeptide is N-acetyl-gamma-glutamyl-phosphate reductase (Pseudoalteromonas atlantica (strain T6c / ATCC BAA-1087)).